We begin with the raw amino-acid sequence, 170 residues long: MPRSQKNDNFIDKTFTIIADILLQIIPTTQREKEAFTHYRDGMSAQSEGEYAEALQNYYEAMRLEIDPYDRSYILYNIGLIHTSNGEHAKALEYYFQALERNSSLPQALNNMAVICHYRGEQAIEEGDPETCEVWFDQAADYWKKAISLAPSNYIEAQNWLRITGRSKIK.

3 TPR repeats span residues 35–68 (AFTHYRDGMSAQSEGEYAEALQNYYEAMRLEIDP), 72–105 (SYILYNIGLIHTSNGEHAKALEYYFQALERNSSL), and 120–153 (GEQAIEEGDPETCEVWFDQAADYWKKAISLAPSN).

The protein belongs to the Ycf3 family.

The protein resides in the plastid. The protein localises to the chloroplast thylakoid membrane. Essential for the assembly of the photosystem I (PSI) complex. May act as a chaperone-like factor to guide the assembly of the PSI subunits. The protein is Photosystem I assembly protein Ycf3 of Anthoceros angustus (Hornwort).